A 598-amino-acid chain; its full sequence is Elongation factor 4 (598 aa).

The tr-type G domain maps to 4–181 (KKIRNFAIIA…AIVNLIPPPQ (178 aa)). GTP-binding positions include 16–21 (DHGKST) and 128–131 (NKID).

This sequence belongs to the TRAFAC class translation factor GTPase superfamily. Classic translation factor GTPase family. LepA subfamily.

It is found in the cell membrane. It carries out the reaction GTP + H2O = GDP + phosphate + H(+). In terms of biological role, required for accurate and efficient protein synthesis under certain stress conditions. May act as a fidelity factor of the translation reaction, by catalyzing a one-codon backward translocation of tRNAs on improperly translocated ribosomes. Back-translocation proceeds from a post-translocation (POST) complex to a pre-translocation (PRE) complex, thus giving elongation factor G a second chance to translocate the tRNAs correctly. Binds to ribosomes in a GTP-dependent manner. This Mesomycoplasma hyopneumoniae (strain J / ATCC 25934 / NCTC 10110) (Mycoplasma hyopneumoniae) protein is Elongation factor 4.